The sequence spans 62 residues: Conotoxin Tx5.1 (62 aa).

The first 22 residues, 1-22 (MCCLPVFVILLLLIASAPSVDA), serve as a signal peptide directing secretion. Residues 23 to 49 (QPKTKDDVPLAPLHDNAKSALQHLNQR) constitute a propeptide that is removed on maturation. Residue Q60 is modified to Glutamine amide.

It belongs to the conotoxin T superfamily. In terms of processing, contains 2 disulfide bonds that can be either 'C1-C3, C2-C4' or 'C1-C4, C2-C3', since these disulfide connectivities have been observed for conotoxins with cysteine framework V (for examples, see AC P0DQQ7 and AC P81755). In terms of tissue distribution, expressed by the venom duct.

It localises to the secreted. This is Conotoxin Tx5.1 from Conus textile (Cloth-of-gold cone).